The primary structure comprises 99 residues: Small ribosomal subunit protein eS24 (99 aa).

Belongs to the eukaryotic ribosomal protein eS24 family.

In Pyrococcus abyssi (strain GE5 / Orsay), this protein is Small ribosomal subunit protein eS24.